The chain runs to 685 residues: Diphthine--ammonia ligase (685 aa).

It in the C-terminal section; belongs to the RutC family. In the N-terminal section; belongs to the Diphthine--ammonia ligase family. Interacts with elongation factor 2 (eEF-2; EFT1 or EFT2).

It localises to the cytoplasm. It catalyses the reaction diphthine-[translation elongation factor 2] + NH4(+) + ATP = diphthamide-[translation elongation factor 2] + AMP + diphosphate + H(+). It participates in protein modification; peptidyl-diphthamide biosynthesis. In terms of biological role, amidase that catalyzes the last step of diphthamide biosynthesis using ammonium and ATP. Diphthamide biosynthesis consists in the conversion of an L-histidine residue in the translation elongation factor eEF-2 (EFT1 or EFT2) to diphthamide. This is Diphthine--ammonia ligase (DPH6) from Saccharomyces cerevisiae (strain ATCC 204508 / S288c) (Baker's yeast).